The primary structure comprises 495 residues: UDP-N-acetylmuramate--L-alanine ligase (495 aa).

122–128 (GTHGKTT) serves as a coordination point for ATP.

It belongs to the MurCDEF family.

The protein resides in the cytoplasm. The enzyme catalyses UDP-N-acetyl-alpha-D-muramate + L-alanine + ATP = UDP-N-acetyl-alpha-D-muramoyl-L-alanine + ADP + phosphate + H(+). It participates in cell wall biogenesis; peptidoglycan biosynthesis. Functionally, cell wall formation. The protein is UDP-N-acetylmuramate--L-alanine ligase of Mycobacterium leprae (strain TN).